The following is a 122-amino-acid chain: Holo-[acyl-carrier-protein] synthase (122 aa).

Residues Asp-9 and Glu-58 each coordinate Mg(2+).

Belongs to the P-Pant transferase superfamily. AcpS family. Mg(2+) is required as a cofactor.

It localises to the cytoplasm. It catalyses the reaction apo-[ACP] + CoA = holo-[ACP] + adenosine 3',5'-bisphosphate + H(+). In terms of biological role, transfers the 4'-phosphopantetheine moiety from coenzyme A to a Ser of acyl-carrier-protein. This Chlamydia caviae (strain ATCC VR-813 / DSM 19441 / 03DC25 / GPIC) (Chlamydophila caviae) protein is Holo-[acyl-carrier-protein] synthase.